Consider the following 225-residue polypeptide: Recoverin family protein DDB_G0274781 (225 aa).

Residues Met-1–Lys-13 are compositionally biased toward low complexity. The interval Met-1–Ile-20 is disordered. Residue Gly-2 is the site of N-myristoyl glycine attachment. 3 consecutive EF-hand domains span residues Asp-78–Gly-113, Thr-114–Ser-149, and Met-174–Ile-209. Residues Asp-91, Asn-93, Asp-95, Thr-97, Glu-102, Asp-127, Asp-129, Asn-131, Tyr-133, Glu-138, Asp-187, Asn-189, Asp-191, Lys-193, and Glu-198 each contribute to the Ca(2+) site.

It belongs to the recoverin family.

This is Recoverin family protein DDB_G0274781 from Dictyostelium discoideum (Social amoeba).